The following is a 271-amino-acid chain: ATP synthase subunit a (271 aa).

The next 5 membrane-spanning stretches (helical) occupy residues 40-60 (TINIDSMFFSVVLGLLFLVLF), 100-120 (LIAPLALTIFVWVFLMNLMDL), 146-166 (DVNVTLSMALGVFILILFYSI), 220-240 (LIFILIAGLLPWWSQWILNVP), and 242-262 (AIFHILIITLQAFIFMVLTIV).

This sequence belongs to the ATPase A chain family. As to quaternary structure, F-type ATPases have 2 components, CF(1) - the catalytic core - and CF(0) - the membrane proton channel. CF(1) has five subunits: alpha(3), beta(3), gamma(1), delta(1), epsilon(1). CF(0) has three main subunits: a(1), b(2) and c(9-12). The alpha and beta chains form an alternating ring which encloses part of the gamma chain. CF(1) is attached to CF(0) by a central stalk formed by the gamma and epsilon chains, while a peripheral stalk is formed by the delta and b chains.

The protein resides in the cell inner membrane. Key component of the proton channel; it plays a direct role in the translocation of protons across the membrane. The sequence is that of ATP synthase subunit a from Escherichia coli O8 (strain IAI1).